Reading from the N-terminus, the 221-residue chain is GTP cyclohydrolase III (221 aa).

This sequence belongs to the archaeal-type GTP cyclohydrolase family.

It carries out the reaction GTP + 3 H2O = 2-amino-5-formylamino-6-(5-phospho-D-ribosylamino)pyrimidin-4(3H)-one + 2 phosphate + 2 H(+). Functionally, catalyzes the formation of 2-amino-5-formylamino-6-ribofuranosylamino-4(3H)-pyrimidinone ribonucleotide monophosphate and inorganic phosphate from GTP. Also has an independent pyrophosphate phosphohydrolase activity. This Pyrobaculum neutrophilum (strain DSM 2338 / JCM 9278 / NBRC 100436 / V24Sta) (Thermoproteus neutrophilus) protein is GTP cyclohydrolase III.